Reading from the N-terminus, the 257-residue chain is Type III pantothenate kinase (257 aa).

Residue 6–13 (DCGNTNTV) participates in ATP binding. A substrate-binding site is contributed by 107-110 (GPDR). Residue aspartate 109 is the Proton acceptor of the active site. K(+) is bound at residue aspartate 129. ATP is bound at residue threonine 132. Threonine 184 lines the substrate pocket.

This sequence belongs to the type III pantothenate kinase family. In terms of assembly, homodimer. It depends on NH4(+) as a cofactor. K(+) is required as a cofactor.

Its subcellular location is the cytoplasm. It catalyses the reaction (R)-pantothenate + ATP = (R)-4'-phosphopantothenate + ADP + H(+). Its pathway is cofactor biosynthesis; coenzyme A biosynthesis; CoA from (R)-pantothenate: step 1/5. In terms of biological role, catalyzes the phosphorylation of pantothenate (Pan), the first step in CoA biosynthesis. The polypeptide is Type III pantothenate kinase (Cereibacter sphaeroides (strain ATCC 17025 / ATH 2.4.3) (Rhodobacter sphaeroides)).